The following is a 230-amino-acid chain: Orotidine 5'-phosphate decarboxylase (230 aa).

Substrate-binding positions include aspartate 8, lysine 32, 59 to 68 (DLKLYDIPNT), threonine 118, arginine 178, glutamine 187, glycine 207, and arginine 208. Lysine 61 (proton donor) is an active-site residue.

The protein belongs to the OMP decarboxylase family. Type 1 subfamily. In terms of assembly, homodimer.

The enzyme catalyses orotidine 5'-phosphate + H(+) = UMP + CO2. It functions in the pathway pyrimidine metabolism; UMP biosynthesis via de novo pathway; UMP from orotate: step 2/2. Functionally, catalyzes the decarboxylation of orotidine 5'-monophosphate (OMP) to uridine 5'-monophosphate (UMP). In Nautilia profundicola (strain ATCC BAA-1463 / DSM 18972 / AmH), this protein is Orotidine 5'-phosphate decarboxylase.